The chain runs to 316 residues: 4-hydroxy-3-methylbut-2-enyl diphosphate reductase (316 aa).

A [4Fe-4S] cluster-binding site is contributed by Cys-12. (2E)-4-hydroxy-3-methylbut-2-enyl diphosphate contacts are provided by His-41 and His-74. Dimethylallyl diphosphate contacts are provided by His-41 and His-74. Positions 41 and 74 each coordinate isopentenyl diphosphate. Cys-96 contributes to the [4Fe-4S] cluster binding site. His-124 serves as a coordination point for (2E)-4-hydroxy-3-methylbut-2-enyl diphosphate. His-124 is a dimethylallyl diphosphate binding site. His-124 is a binding site for isopentenyl diphosphate. Glu-126 functions as the Proton donor in the catalytic mechanism. Residue Thr-168 participates in (2E)-4-hydroxy-3-methylbut-2-enyl diphosphate binding. Cys-198 is a [4Fe-4S] cluster binding site. (2E)-4-hydroxy-3-methylbut-2-enyl diphosphate is bound by residues Ser-226, Ser-227, Asn-228, and Ser-270. Ser-226, Ser-227, Asn-228, and Ser-270 together coordinate dimethylallyl diphosphate. Ser-226, Ser-227, Asn-228, and Ser-270 together coordinate isopentenyl diphosphate.

This sequence belongs to the IspH family. The cofactor is [4Fe-4S] cluster.

It catalyses the reaction isopentenyl diphosphate + 2 oxidized [2Fe-2S]-[ferredoxin] + H2O = (2E)-4-hydroxy-3-methylbut-2-enyl diphosphate + 2 reduced [2Fe-2S]-[ferredoxin] + 2 H(+). It carries out the reaction dimethylallyl diphosphate + 2 oxidized [2Fe-2S]-[ferredoxin] + H2O = (2E)-4-hydroxy-3-methylbut-2-enyl diphosphate + 2 reduced [2Fe-2S]-[ferredoxin] + 2 H(+). The protein operates within isoprenoid biosynthesis; dimethylallyl diphosphate biosynthesis; dimethylallyl diphosphate from (2E)-4-hydroxy-3-methylbutenyl diphosphate: step 1/1. It participates in isoprenoid biosynthesis; isopentenyl diphosphate biosynthesis via DXP pathway; isopentenyl diphosphate from 1-deoxy-D-xylulose 5-phosphate: step 6/6. Functionally, catalyzes the conversion of 1-hydroxy-2-methyl-2-(E)-butenyl 4-diphosphate (HMBPP) into a mixture of isopentenyl diphosphate (IPP) and dimethylallyl diphosphate (DMAPP). Acts in the terminal step of the DOXP/MEP pathway for isoprenoid precursor biosynthesis. This chain is 4-hydroxy-3-methylbut-2-enyl diphosphate reductase, found in Acinetobacter baumannii (strain AB307-0294).